Consider the following 211-residue polypeptide: Thiamine-phosphate synthase (211 aa).

4-amino-2-methyl-5-(diphosphooxymethyl)pyrimidine-binding positions include 36-40 (QLREK) and Asn-68. The Mg(2+) site is built by Asp-69 and Asp-88. Ser-107 is a binding site for 4-amino-2-methyl-5-(diphosphooxymethyl)pyrimidine. 133 to 135 (TGS) serves as a coordination point for 2-[(2R,5Z)-2-carboxy-4-methylthiazol-5(2H)-ylidene]ethyl phosphate. Lys-136 contacts 4-amino-2-methyl-5-(diphosphooxymethyl)pyrimidine. Residues Gly-167 and 187–188 (IT) each bind 2-[(2R,5Z)-2-carboxy-4-methylthiazol-5(2H)-ylidene]ethyl phosphate.

Belongs to the thiamine-phosphate synthase family. Mg(2+) is required as a cofactor.

It carries out the reaction 2-[(2R,5Z)-2-carboxy-4-methylthiazol-5(2H)-ylidene]ethyl phosphate + 4-amino-2-methyl-5-(diphosphooxymethyl)pyrimidine + 2 H(+) = thiamine phosphate + CO2 + diphosphate. It catalyses the reaction 2-(2-carboxy-4-methylthiazol-5-yl)ethyl phosphate + 4-amino-2-methyl-5-(diphosphooxymethyl)pyrimidine + 2 H(+) = thiamine phosphate + CO2 + diphosphate. The catalysed reaction is 4-methyl-5-(2-phosphooxyethyl)-thiazole + 4-amino-2-methyl-5-(diphosphooxymethyl)pyrimidine + H(+) = thiamine phosphate + diphosphate. It participates in cofactor biosynthesis; thiamine diphosphate biosynthesis; thiamine phosphate from 4-amino-2-methyl-5-diphosphomethylpyrimidine and 4-methyl-5-(2-phosphoethyl)-thiazole: step 1/1. In terms of biological role, condenses 4-methyl-5-(beta-hydroxyethyl)thiazole monophosphate (THZ-P) and 2-methyl-4-amino-5-hydroxymethyl pyrimidine pyrophosphate (HMP-PP) to form thiamine monophosphate (TMP). The chain is Thiamine-phosphate synthase from Haloarcula marismortui (strain ATCC 43049 / DSM 3752 / JCM 8966 / VKM B-1809) (Halobacterium marismortui).